Reading from the N-terminus, the 178-residue chain is Endoribonuclease YbeY (178 aa).

Zn(2+) contacts are provided by histidine 118, histidine 122, and histidine 128.

This sequence belongs to the endoribonuclease YbeY family. Requires Zn(2+) as cofactor.

Its subcellular location is the cytoplasm. In terms of biological role, single strand-specific metallo-endoribonuclease involved in late-stage 70S ribosome quality control and in maturation of the 3' terminus of the 16S rRNA. The chain is Endoribonuclease YbeY from Mycobacterium leprae (strain Br4923).